We begin with the raw amino-acid sequence, 136 residues long: uncharacterized protein (136 aa).

It is found in the cytoplasm. Its subcellular location is the nucleus. This is an uncharacterized protein from Schizosaccharomyces pombe (strain 972 / ATCC 24843) (Fission yeast).